Here is a 390-residue protein sequence, read N- to C-terminus: Phosphoglycerate kinase (390 aa).

Substrate-binding positions include 21–23 (DLN), Arg36, 59–62 (HLGR), Arg112, and Arg145. Residues Lys196, Glu317, and 343-346 (GGDT) each bind ATP.

Belongs to the phosphoglycerate kinase family. In terms of assembly, monomer.

The protein resides in the cytoplasm. The catalysed reaction is (2R)-3-phosphoglycerate + ATP = (2R)-3-phospho-glyceroyl phosphate + ADP. Its pathway is carbohydrate degradation; glycolysis; pyruvate from D-glyceraldehyde 3-phosphate: step 2/5. The chain is Phosphoglycerate kinase from Cellvibrio japonicus (strain Ueda107) (Pseudomonas fluorescens subsp. cellulosa).